A 406-amino-acid polypeptide reads, in one-letter code: S-adenosylmethionine synthase (406 aa).

His5 contributes to the ATP binding site. Asp7 is a Mg(2+) binding site. Glu33 is a binding site for K(+). Positions 46 and 89 each coordinate L-methionine. A flexible loop region spans residues 89 to 99; the sequence is QSPDIAQGVDT. ATP contacts are provided by residues 164–166, 240–241, Asp249, 255–256, Ala272, and Lys276; these read DGK, KF, and RK. Asp249 is an L-methionine binding site. Lys280 is a binding site for L-methionine.

Belongs to the AdoMet synthase family. As to quaternary structure, homotetramer; dimer of dimers. It depends on Mg(2+) as a cofactor. K(+) is required as a cofactor.

Its subcellular location is the cytoplasm. The enzyme catalyses L-methionine + ATP + H2O = S-adenosyl-L-methionine + phosphate + diphosphate. It functions in the pathway amino-acid biosynthesis; S-adenosyl-L-methionine biosynthesis; S-adenosyl-L-methionine from L-methionine: step 1/1. Functionally, catalyzes the formation of S-adenosylmethionine (AdoMet) from methionine and ATP. The overall synthetic reaction is composed of two sequential steps, AdoMet formation and the subsequent tripolyphosphate hydrolysis which occurs prior to release of AdoMet from the enzyme. This chain is S-adenosylmethionine synthase, found in Synechococcus sp. (strain ATCC 27144 / PCC 6301 / SAUG 1402/1) (Anacystis nidulans).